Reading from the N-terminus, the 621-residue chain is MTDASVKETFSFQTEVGQLLDIVAGSLYSNREIFLRELVSNASDACDKLRYEALTNPSLAQNADEFAISLAVDKKAKTLSVSDNGIGMNHGDLLDTLGTIARSGTGAFLDALKSEEKGDIGLIGQFGVGFYSAFMVAERVDVLTRKAGEDESWLWSSDGKGEFSIEPGERAQSGTTVTLHLKKDAKEFLEESRIRHIIKTYSEHISFPVRLDTEALNSASAIWTRAPKEITEEQHTEFYHHVSNAFDKPWHVLHNRVEGTVNHTSLLYVPSMAPFDLYEAERKSHVKLYVNRVFISDNTRDLIPAYLRFLRGVVDSQDLSLNVSREMLQSDPKLAKIKTSVTKKVLSELKKKAKKSPEDYAGFWQNFGPVLKEGLIEDPALRDRILEICRFSSTKSGDVTSLADYISRCKEGQDAIYYIAGDDARKIAQSPHLEGFRAKDVEVLLLSDHVDEFWLQHITEFEGKPFKSITRGAADLDKINEGEKADDAEEEAQAPDLNDLIAALKLELGASVKDVRPSKRLTDSPVCLIADEGDIDVNLERMLKRHGQLQDAMPRVLELNPDHRIITKLAERAKGSAAASDTLLKDAAHLLLDQARIADGETPADPAEFVRRLGSVMDSAL.

The segment at 1–325 (MTDASVKETF…SQDLSLNVSR (325 aa)) is a; substrate-binding. A b region spans residues 326-541 (EMLQSDPKLA…EGDIDVNLER (216 aa)). The segment at 542-621 (MLKRHGQLQD…RLGSVMDSAL (80 aa)) is c.

This sequence belongs to the heat shock protein 90 family. In terms of assembly, homodimer.

Its subcellular location is the cytoplasm. Functionally, molecular chaperone. Has ATPase activity. This chain is Chaperone protein HtpG, found in Roseobacter denitrificans (strain ATCC 33942 / OCh 114) (Erythrobacter sp. (strain OCh 114)).